The primary structure comprises 2111 residues: Fatty acid synthase beta subunit aflB (2111 aa).

Residues 200 to 565 (IVTVFNGQGV…KAGTAARVIL (366 aa)) are acetyltransferase (AT) domain. An enoyl reductase (ER) domain region spans residues 618-863 (SRALGLPPVM…AIVDTPGVPD (246 aa)). The segment at 1195–1688 (GTKPSWRKAL…SPGETLLVDI (494 aa)) is dehydratase (DH) domain. The region spanning 1606–1708 (EMPTSSDQYA…IVVATARSES (103 aa)) is the MaoC-like domain. Residues 1727–2091 (YLFTGQGSQK…FENVLAISES (365 aa)) are malonyl/palmitoyl transferase (MT/PT) domain.

The protein belongs to the fungal fatty acid synthetase subunit beta family. [Alpha(6)beta(6)] hexamers of two multifunctional subunits (alpha and beta).

The enzyme catalyses acetyl-CoA + n malonyl-CoA + 2n NADPH + 4n H(+) = a long-chain-acyl-CoA + n CoA + n CO2 + 2n NADP(+).. The catalysed reaction is holo-[ACP] + acetyl-CoA = acetyl-[ACP] + CoA. It carries out the reaction holo-[ACP] + malonyl-CoA = malonyl-[ACP] + CoA. It catalyses the reaction a (3R)-hydroxyacyl-[ACP] = a (2E)-enoyl-[ACP] + H2O. The enzyme catalyses a 2,3-saturated acyl-[ACP] + NAD(+) = a (2E)-enoyl-[ACP] + NADH + H(+). The catalysed reaction is (9Z)-octadecenoyl-[ACP] + H2O = (9Z)-octadecenoate + holo-[ACP] + H(+). It participates in secondary metabolite biosynthesis. In terms of biological role, fatty acid synthase beta subunit; part of the gene cluster that mediates the biosynthesis of aspercryptins, linear lipopeptides built from six amino acids including 2 highly unusual and nonproteogenic amino acids, 2-amino-octanoic acid (2aoa) and 2-amino-dodecanol (2adol). The core structure of aspercryptins is as follows: Ser/Ala-Thr-Ile/Val-2aoa-Asn-2adol. The first step of aspercryptin biosynthesis is the generation of the fatty acid precursors, octanoic and dodecanoic acids, by the FAS subunits atnF and atnM. The fatty acid precursors are likely transformed into the corresponding alpha-amino fatty acids in three steps. First, they are hydroxylated by the cytochrome P450 monooxygenase atnE, then oxidized to the corresponding alpha-keto acids by the NAD(P)-dependent oxidoreductase atnD, and finally converted to the alpha-amino fatty acids by the PLP-dependent aminotransferases atnH or atnJ. the alpha-amino fatty acids, 2-amino-octanoic and 2-amino-dodecanoic acids, are recognized, activated, and covalently tethered to the NRPS atnA by its fourth and sixth adenylation domains. The second module of atnA is the Thr module and contains an epimerase (E) domain responsible for the epimerization of Thr to D-allo-Thr. Additionally, despite atnA having only one epimerase domain, the first amino acid of aspercryptin A1 is D-Ser, suggesting that serine is either loaded directly as D-Ser on the first module or that the epimerase domain in the threonine module epimerizes both L-Ser and L-Thr. After condensation of the hexapeptide of aspercryptin, the C-terminal reductase (TE) domain might be involved in the reductive release and production of the aldehyde hexapeptide. Further reduction would generate aspercryptins. The variety of aspercryptins produced reflects the flexibility of the atnA NRPS, allowing incorporation of alanine instead of serine, valine for isoleucine, and a C10 fatty amino alcohol instead of the C12 version. AtnB seems to be involved in the selectivity for Ile versus Val by the third module. Moreover, type B, C and D aspercryptins have an additional N-terminal cichorine, acetyl and propionyl group respectively. The protein is Fatty acid synthase beta subunit aflB of Emericella nidulans (strain FGSC A4 / ATCC 38163 / CBS 112.46 / NRRL 194 / M139) (Aspergillus nidulans).